The primary structure comprises 851 residues: MKTTKIVIASLVSLTMVSNPLLTFAATNDVIDNTTEITTDKETSSTQPTIKNTLKAGQTQSFNDWFPDDNFASEVAAAFEMQATDTISEEQLATLTSLDCHNSSITDMTGIEKLTGLTKLICTSNNITTLDLSQNTNLTYLACDSNKLTNLDVTPLTKLTYLNCDTNKLTKLDVSQNPLLTYLNCARNTLTEIDVSHNTQLTELDCHLNKKITKLDVTPQTQLTTLDCSFNKITELDVSQNKLLNRLNCDTNNITKLDLNQNIQLTFLDCSSNKLTEIDVTPLTQLTYFDCSVNPLTELDVSTLSKLTTLHCIQTDLLEIDLTHNTQLIYFQAEGCRKIKELDVTHNTQLYLLDCQAAGITELDLSQNPKLVYLYLNNTELTELDVSHNTKLKSLSCVNAHIQDFSSVGKIPALNNNFEAEGQTITMPKETLTNNSLTIAVSPDLLDQFGNPMNIEPGDGGVYDQATNTITWENLSTDNPAVTYTFTSENGAIVGTVTTPFEAPQPIKGEDVTVHYLDDKGEKLADDEVLSGNLDDPYTSSAKDIPDYTLTTTPDNATGTFTTTSQSVTYVYTKNIVAAEPVTVNYVDDTGKTLSPSEILNGNVGDTYNATAKQIDGYTLSAEPTNATGQFTSSAQTVNYIYTKNPAPEKGVVEIHYVDEDNKQLNSTTEISGTIGDNYTTEPKTIEGYTLTTTPGNATGTFTTGSQTVTYVYTKNIEAAEPITVNYVDANGKTLAPSETLNGNVGDTYKATAKQIDGYTLSAEPTNATGQFTSSAQTVNYIYTKNTNTDQPLPTKKPTNTTPTKPSNLKTTEVKKASDTLPKTGDSAPWKSALLGVFLSSTALVIWKKKK.

The first 25 residues, Met-1–Ala-25, serve as a signal peptide directing secretion. LRR repeat units follow at residues Thr-94–Thr-115, Gly-116–Thr-136, Asn-137–Thr-157, Lys-158–Leu-179, Leu-180–Gln-200, Leu-201–Thr-221, Gln-222–Leu-243, Leu-244–Ile-263, Gln-264–Thr-284, Gln-285–Lys-306, Asp-316–Asn-325, Lys-338–Ala-357, Gly-359–Asn-368, and Glu-380–Ile-402. 4 MucBP domains span residues Pro-506–Val-568, Ile-576–Val-638, Ala-647–Val-709, and Ile-717–Val-779. The disordered stretch occupies residues Asn-786–Gly-825. Over residues Pro-792 to Thr-811 the composition is skewed to low complexity. Positions Leu-821–Gly-825 match the LPXTG sorting signal motif. Position 824 is a pentaglycyl murein peptidoglycan amidated threonine (Thr-824). A propeptide spans Gly-825–Lys-851 (removed by sortase A).

The protein belongs to the internalin family. Nearly full-length mature protein and an internal LRR-containing fragment interact in vitro with human intestinal mucin-2 (MUC2) but not with mucin-1. LRR fragment binding is slightly better at pH 5.5, (the pH of the intestine) than at pH 7.4.

It is found in the secreted. Its subcellular location is the cell wall. With respect to regulation, despite being transcribed during bacterial growth in culture the protein is only detected in infected mice. Functionally, involved in several steps of L.monocytogenes infection by both intravenous and oral infection. Probably acts as an adhesion; upon ectopic expression in L.innocula bacteria adhere better to human cell lines. This Listeria monocytogenes serovar 1/2a (strain ATCC BAA-679 / EGD-e) protein is Internalin J (inlJ).